The chain runs to 466 residues: Vacuolar-processing enzyme delta-isozyme (466 aa).

A signal peptide spans 1–24 (MSSPLGHFQILVFLHALLIFSAES). A glycan (N-linked (GlcNAc...) asparagine) is linked at Asn137. Residue His164 is part of the active site. Cys206 (nucleophile) is an active-site residue. Cys239 and Cys253 form a disulfide bridge. The N-linked (GlcNAc...) asparagine glycan is linked to Asn322. 2 disulfide bridges follow: Cys417/Cys447 and Cys429/Cys464.

The protein belongs to the peptidase C13 family. In terms of processing, auto-catalytic activation. In terms of tissue distribution, seed specific. Restricted to developing seeds at 7 days after anthesis, and, at lower levels, detected in flowers. Detected in siliques, specifically in seed coats (at protein level).

It is found in the secreted. Its subcellular location is the extracellular space. The protein resides in the cell wall. It localises to the vacuole. The catalysed reaction is Hydrolysis of proteins and small molecule substrates at -Asn-|-Xaa- bonds.. With respect to regulation, strongly inhibited by biotin-YVAD-fmk (a caspase-1 inhibitor) and by Ac-DEVD-fmk. Functionally, asparagine-specific endopeptidase that may be involved in processing of proteins targeted to vacuoles. Probably involved in post-translational proteolysis of seed storage proteins in the protein storage vacuole of developing seeds. Exhibits a caspase-1-like activity in extracellular granules. At the early stage of seed development, required for the formation of the seed coat, by regulating cell death of specific cell layers in inner integument. The protein is Vacuolar-processing enzyme delta-isozyme of Arabidopsis thaliana (Mouse-ear cress).